Here is a 216-residue protein sequence, read N- to C-terminus: Thylakoid lumenal 16.5 kDa protein, chloroplastic (216 aa).

The transit peptide at 1–38 (MAKSLLCSSTLNPFFSTTLSSSKKNQIAYSGNSKNQTS) directs the protein to the chloroplast. Residues 39-73 (SSLLWKRRELSLGFMSSLVAIGLVSNDRRRHDANA) constitute a thylakoid transit peptide.

It is found in the plastid. The protein localises to the chloroplast thylakoid lumen. In Arabidopsis thaliana (Mouse-ear cress), this protein is Thylakoid lumenal 16.5 kDa protein, chloroplastic.